A 537-amino-acid chain; its full sequence is 5,6-dihydroxyindole-2-carboxylic acid oxidase (537 aa).

An N-terminal signal peptide occupies residues 1-24 (MKSPTLLSLGYMFLVLLFFQQAWA). Residues 25-477 (QFPRECATIE…WPSRSFSISE (453 aa)) lie on the Lumenal, melanosome side of the membrane. Intrachain disulfides connect cysteine 30–cysteine 41, cysteine 42–cysteine 65, cysteine 56–cysteine 99, cysteine 101–cysteine 110, and cysteine 113–cysteine 122. Asparagine 96 and asparagine 104 each carry an N-linked (GlcNAc...) asparagine glycan. A glycan (N-linked (GlcNAc...) asparagine) is linked at asparagine 181. Zn(2+)-binding residues include histidine 192, histidine 215, and histidine 224. Cystine bridges form between cysteine 258–cysteine 261 and cysteine 290–cysteine 303. N-linked (GlcNAc...) asparagine glycosylation is found at asparagine 304 and asparagine 350. Residues histidine 377 and histidine 381 each contribute to the Zn(2+) site. An N-linked (GlcNAc...) asparagine glycan is attached at asparagine 385. Histidine 404 contacts Zn(2+). A helical transmembrane segment spans residues 478–501 (IVTIAVVAALSLVAVIFAGASCLI). At 502–537 (RARSNMDEANQPLLTDQYQHYIEEYEKIHNPNQSVV) the chain is on the cytoplasmic side.

It belongs to the tyrosinase family. As to quaternary structure, monomer. Interacts with ATP7A. Interacts with SLC45A2. Cu(2+) is required as a cofactor. The cofactor is Zn(2+). In terms of processing, glycosylated.

It localises to the melanosome membrane. The catalysed reaction is 2 5,6-dihydroxyindole-2-carboxylate + O2 = 2 indole-5,6-quinone-2-carboxylate + 2 H2O. Its pathway is pigment biosynthesis; melanin biosynthesis. In terms of biological role, plays a role in melanin biosynthesis. Catalyzes the oxidation of 5,6-dihydroxyindole-2-carboxylic acid (DHICA) into indole-5,6-quinone-2-carboxylic acid. May regulate or influence the type of melanin synthesized. Also to a lower extent, capable of hydroxylating tyrosine and producing melanin. The polypeptide is 5,6-dihydroxyindole-2-carboxylic acid oxidase (TYRP1) (Bos taurus (Bovine)).